A 196-amino-acid polypeptide reads, in one-letter code: Holliday junction branch migration complex subunit RuvA (196 aa).

Positions methionine 1–alanine 63 are domain I. The interval threonine 64–alanine 142 is domain II. Residues proline 143–threonine 146 form a flexible linker region. The tract at residues valine 147 to lysine 196 is domain III.

This sequence belongs to the RuvA family. Homotetramer. Forms an RuvA(8)-RuvB(12)-Holliday junction (HJ) complex. HJ DNA is sandwiched between 2 RuvA tetramers; dsDNA enters through RuvA and exits via RuvB. An RuvB hexamer assembles on each DNA strand where it exits the tetramer. Each RuvB hexamer is contacted by two RuvA subunits (via domain III) on 2 adjacent RuvB subunits; this complex drives branch migration. In the full resolvosome a probable DNA-RuvA(4)-RuvB(12)-RuvC(2) complex forms which resolves the HJ.

The protein localises to the cytoplasm. The RuvA-RuvB-RuvC complex processes Holliday junction (HJ) DNA during genetic recombination and DNA repair, while the RuvA-RuvB complex plays an important role in the rescue of blocked DNA replication forks via replication fork reversal (RFR). RuvA specifically binds to HJ cruciform DNA, conferring on it an open structure. The RuvB hexamer acts as an ATP-dependent pump, pulling dsDNA into and through the RuvAB complex. HJ branch migration allows RuvC to scan DNA until it finds its consensus sequence, where it cleaves and resolves the cruciform DNA. This Streptococcus gordonii (strain Challis / ATCC 35105 / BCRC 15272 / CH1 / DL1 / V288) protein is Holliday junction branch migration complex subunit RuvA.